Reading from the N-terminus, the 124-residue chain is MPTIQQLVRKGRTPKVTKTKAPALKANPQQRGVCTRVYTTTPKKPNSALRKVARVKLSNGTEVTAYIPGEGHNLQEHSMVLVRGGRVKDLPGVRYKIVRGALDTQAVKNRKQARSRYGAKMEKK.

The disordered stretch occupies residues 1-30 (MPTIQQLVRKGRTPKVTKTKAPALKANPQQ). Residues 9–18 (RKGRTPKVTK) are compositionally biased toward basic residues.

It belongs to the universal ribosomal protein uS12 family. In terms of assembly, part of the 30S ribosomal subunit. Contacts proteins S8 and S17. May interact with IF1 in the 30S initiation complex.

In terms of biological role, with S4 and S5 plays an important role in translational accuracy. Functionally, interacts with and stabilizes bases of the 16S rRNA that are involved in tRNA selection in the A site and with the mRNA backbone. Located at the interface of the 30S and 50S subunits, it traverses the body of the 30S subunit contacting proteins on the other side and probably holding the rRNA structure together. The combined cluster of proteins S8, S12 and S17 appears to hold together the shoulder and platform of the 30S subunit. This chain is Small ribosomal subunit protein uS12, found in Leifsonia xyli subsp. xyli (strain CTCB07).